A 358-amino-acid polypeptide reads, in one-letter code: Probable tartrate dehydrogenase/decarboxylase TtuC' (358 aa).

Residues Asp-222, Asp-246, and Asp-250 each contribute to the Mn(2+) site.

Belongs to the isocitrate and isopropylmalate dehydrogenases family. It depends on Mg(2+) as a cofactor. Requires Mn(2+) as cofactor. K(+) serves as cofactor.

It is found in the cytoplasm. The enzyme catalyses tartrate + NAD(+) = 2-hydroxy-3-oxosuccinate + NADH + H(+). It carries out the reaction (2R,3S)-tartrate + NAD(+) = 2-hydroxy-3-oxosuccinate + NADH + H(+). The catalysed reaction is (2R,3R)-tartrate + NAD(+) = 2-hydroxy-3-oxosuccinate + NADH + H(+). It catalyses the reaction (2R,3R)-tartrate + H(+) = (R)-glycerate + CO2. The enzyme catalyses (R)-malate + NAD(+) = pyruvate + CO2 + NADH. The protein operates within carbohydrate acid metabolism; tartrate degradation; 2-hydroxy-3-oxosuccinate from L-tartrate: step 1/1. It participates in carbohydrate acid metabolism; tartrate degradation; 2-hydroxy-3-oxosuccinate from meso-tartrate: step 1/1. It functions in the pathway carbohydrate acid metabolism; tartrate degradation; D-glycerate from L-tartrate: step 1/1. In terms of biological role, has multiple catalytic activities. Apart from catalyzing the oxidation of (+)-tartrate to oxaloglycolate, also converts meso-tartrate to D-glycerate and catalyzes the oxidative decarboxylation of D-malate to pyruvate. The polypeptide is Probable tartrate dehydrogenase/decarboxylase TtuC' (ttuC') (Agrobacterium vitis (Rhizobium vitis)).